The chain runs to 69 residues: DNA-directed RNA polymerase subunit omega (69 aa).

Belongs to the RNA polymerase subunit omega family. The RNAP catalytic core consists of 2 alpha, 1 beta, 1 beta' and 1 omega subunit. When a sigma factor is associated with the core the holoenzyme is formed, which can initiate transcription.

It carries out the reaction RNA(n) + a ribonucleoside 5'-triphosphate = RNA(n+1) + diphosphate. Promotes RNA polymerase assembly. Latches the N- and C-terminal regions of the beta' subunit thereby facilitating its interaction with the beta and alpha subunits. In Geobacter metallireducens (strain ATCC 53774 / DSM 7210 / GS-15), this protein is DNA-directed RNA polymerase subunit omega.